The following is a 112-amino-acid chain: Large ribosomal subunit protein uL22 (112 aa).

It belongs to the universal ribosomal protein uL22 family. In terms of assembly, part of the 50S ribosomal subunit.

Functionally, this protein binds specifically to 23S rRNA; its binding is stimulated by other ribosomal proteins, e.g. L4, L17, and L20. It is important during the early stages of 50S assembly. It makes multiple contacts with different domains of the 23S rRNA in the assembled 50S subunit and ribosome. In terms of biological role, the globular domain of the protein is located near the polypeptide exit tunnel on the outside of the subunit, while an extended beta-hairpin is found that lines the wall of the exit tunnel in the center of the 70S ribosome. This is Large ribosomal subunit protein uL22 from Anaplasma phagocytophilum (strain HZ).